The primary structure comprises 499 residues: Maturase K (499 aa).

The protein belongs to the intron maturase 2 family. MatK subfamily.

Its subcellular location is the plastid. The protein resides in the chloroplast. In terms of biological role, usually encoded in the trnK tRNA gene intron. Probably assists in splicing its own and other chloroplast group II introns. The sequence is that of Maturase K from Camellia sinensis (Tea plant).